A 179-amino-acid chain; its full sequence is Large ribosomal subunit protein uL5 (179 aa).

This sequence belongs to the universal ribosomal protein uL5 family. Part of the 50S ribosomal subunit; part of the 5S rRNA/L5/L18/L25 subcomplex. Contacts the 5S rRNA and the P site tRNA. Forms a bridge to the 30S subunit in the 70S ribosome.

Functionally, this is one of the proteins that bind and probably mediate the attachment of the 5S RNA into the large ribosomal subunit, where it forms part of the central protuberance. In the 70S ribosome it contacts protein S13 of the 30S subunit (bridge B1b), connecting the 2 subunits; this bridge is implicated in subunit movement. Contacts the P site tRNA; the 5S rRNA and some of its associated proteins might help stabilize positioning of ribosome-bound tRNAs. This Bacillus anthracis (strain A0248) protein is Large ribosomal subunit protein uL5.